The sequence spans 311 residues: Tryptophan 2,3-dioxygenase (311 aa).

A disordered region spans residues 1 to 37; sequence MQPPGGDAPAGCPFSGARAAQPAQAAHEAPHVPGEAD. The span at 17–27 shows a compositional bias: low complexity; that stretch reads ARAAQPAQAAH. Substrate is bound by residues 80–84, Tyr-142, and Arg-146; that span reads FIIQH. A heme-binding site is contributed by His-269. Thr-283 is a binding site for substrate.

This sequence belongs to the tryptophan 2,3-dioxygenase family. Homotetramer. The cofactor is heme.

The enzyme catalyses L-tryptophan + O2 = N-formyl-L-kynurenine. It functions in the pathway amino-acid degradation; L-tryptophan degradation via kynurenine pathway; L-kynurenine from L-tryptophan: step 1/2. Heme-dependent dioxygenase that catalyzes the oxidative cleavage of the L-tryptophan (L-Trp) pyrrole ring and converts L-tryptophan to N-formyl-L-kynurenine. Catalyzes the oxidative cleavage of the indole moiety. This Burkholderia orbicola (strain MC0-3) protein is Tryptophan 2,3-dioxygenase.